The sequence spans 323 residues: o-succinylbenzoate synthase (323 aa).

Lys-134 functions as the Proton donor in the catalytic mechanism. Residues Asp-162, Glu-191, and Asp-214 each contribute to the Mg(2+) site. The active-site Proton acceptor is Lys-236.

The protein belongs to the mandelate racemase/muconate lactonizing enzyme family. MenC type 1 subfamily. Requires a divalent metal cation as cofactor.

It carries out the reaction (1R,6R)-6-hydroxy-2-succinyl-cyclohexa-2,4-diene-1-carboxylate = 2-succinylbenzoate + H2O. The protein operates within quinol/quinone metabolism; 1,4-dihydroxy-2-naphthoate biosynthesis; 1,4-dihydroxy-2-naphthoate from chorismate: step 4/7. It participates in quinol/quinone metabolism; menaquinone biosynthesis. Converts 2-succinyl-6-hydroxy-2,4-cyclohexadiene-1-carboxylate (SHCHC) to 2-succinylbenzoate (OSB). This chain is o-succinylbenzoate synthase, found in Yersinia enterocolitica serotype O:8 / biotype 1B (strain NCTC 13174 / 8081).